We begin with the raw amino-acid sequence, 412 residues long: Multifunctional CCA protein (412 aa).

Residues Gly8 and Arg11 each coordinate ATP. 2 residues coordinate CTP: Gly8 and Arg11. Residues Asp21 and Asp23 each coordinate Mg(2+). The ATP site is built by Arg91, Arg137, and Arg140. Arg91, Arg137, and Arg140 together coordinate CTP. In terms of domain architecture, HD spans 226 to 327 (TGEHVLMVVE…VKVLERCDAL (102 aa)).

It belongs to the tRNA nucleotidyltransferase/poly(A) polymerase family. Bacterial CCA-adding enzyme type 1 subfamily. As to quaternary structure, monomer. Can also form homodimers and oligomers. Requires Mg(2+) as cofactor. Ni(2+) serves as cofactor.

The enzyme catalyses a tRNA precursor + 2 CTP + ATP = a tRNA with a 3' CCA end + 3 diphosphate. The catalysed reaction is a tRNA with a 3' CCA end + 2 CTP + ATP = a tRNA with a 3' CCACCA end + 3 diphosphate. Its function is as follows. Catalyzes the addition and repair of the essential 3'-terminal CCA sequence in tRNAs without using a nucleic acid template. Adds these three nucleotides in the order of C, C, and A to the tRNA nucleotide-73, using CTP and ATP as substrates and producing inorganic pyrophosphate. tRNA 3'-terminal CCA addition is required both for tRNA processing and repair. Also involved in tRNA surveillance by mediating tandem CCA addition to generate a CCACCA at the 3' terminus of unstable tRNAs. While stable tRNAs receive only 3'-terminal CCA, unstable tRNAs are marked with CCACCA and rapidly degraded. In Azoarcus sp. (strain BH72), this protein is Multifunctional CCA protein.